A 196-amino-acid chain; its full sequence is Protein GrpE (196 aa).

Residues 1–26 are compositionally biased toward basic and acidic residues; the sequence is MQEPHNQEPIEEQKLSEMEDTLEKQH. Positions 1–40 are disordered; sequence MQEPHNQEPIEEQKLSEMEDTLEKQHSGASTENTERAEEG.

This sequence belongs to the GrpE family. As to quaternary structure, homodimer.

It is found in the cytoplasm. Functionally, participates actively in the response to hyperosmotic and heat shock by preventing the aggregation of stress-denatured proteins, in association with DnaK and GrpE. It is the nucleotide exchange factor for DnaK and may function as a thermosensor. Unfolded proteins bind initially to DnaJ; upon interaction with the DnaJ-bound protein, DnaK hydrolyzes its bound ATP, resulting in the formation of a stable complex. GrpE releases ADP from DnaK; ATP binding to DnaK triggers the release of the substrate protein, thus completing the reaction cycle. Several rounds of ATP-dependent interactions between DnaJ, DnaK and GrpE are required for fully efficient folding. The protein is Protein GrpE of Nitrosomonas eutropha (strain DSM 101675 / C91 / Nm57).